The sequence spans 418 residues: Putative ion-transport protein YfeO (418 aa).

Transmembrane regions (helical) follow at residues 10-30, 54-74, 99-119, 120-140, 149-169, 186-206, 223-243, 258-278, 300-320, 322-342, 343-363, and 371-391; these read LLLS…LIMV, DSPL…GLVI, ALPG…SLGP, EHPI…RLLP, ILAS…AALI, LFAP…FFHP, ILSG…AVWC, VFVL…GGPV, DYFL…ASGF, GGRI…LHEH, VPAV…VLVV, and LFMA…CIVM.

The protein belongs to the chloride channel (TC 2.A.49) family.

It localises to the cell membrane. This Escherichia coli O45:K1 (strain S88 / ExPEC) protein is Putative ion-transport protein YfeO.